A 560-amino-acid chain; its full sequence is Arginine--tRNA ligase (560 aa).

The short motif at 122–132 (ANPNGPLHIGH) is the 'HIGH' region element.

This sequence belongs to the class-I aminoacyl-tRNA synthetase family.

It is found in the cytoplasm. The enzyme catalyses tRNA(Arg) + L-arginine + ATP = L-arginyl-tRNA(Arg) + AMP + diphosphate. This is Arginine--tRNA ligase (argS) from Methanothermobacter thermautotrophicus (strain ATCC 29096 / DSM 1053 / JCM 10044 / NBRC 100330 / Delta H) (Methanobacterium thermoautotrophicum).